The sequence spans 176 residues: Adenine phosphoribosyltransferase (176 aa).

Belongs to the purine/pyrimidine phosphoribosyltransferase family. In terms of assembly, homodimer.

It localises to the cytoplasm. It carries out the reaction AMP + diphosphate = 5-phospho-alpha-D-ribose 1-diphosphate + adenine. It participates in purine metabolism; AMP biosynthesis via salvage pathway; AMP from adenine: step 1/1. Catalyzes a salvage reaction resulting in the formation of AMP, that is energically less costly than de novo synthesis. This is Adenine phosphoribosyltransferase from Borrelia garinii subsp. bavariensis (strain ATCC BAA-2496 / DSM 23469 / PBi) (Borreliella bavariensis).